We begin with the raw amino-acid sequence, 566 residues long: MKTIIALSYIFCLVLGQDFPGNDNSTATLCLGHHAVPNGTLVKTITNDQIEVTNATELVQSSSTGKICNNPHRILDGINCTLIDALLGDPHCDGFQNETWDLFVERSKAFSNCYPYDVPDYASLRSLVASSGTLEFINEGFTWTGVTQNGGSNACKRGPDSGFFSRLNWLYKSGSAYPVLNVTMPNNDNFDKLYIWGVHHPSTDQEQTNLYVQASGRVTVSTKRSQQTIIPNIGSRPWVRGLSSRISIYWTIVKPGDILVINSNGNLIAPRGYFKMRTGKSSIMRSDAPIGTCISECITPNGSIPNDKPFQNVNKITYGACPKYVKQNTLKLATGMRNVPEKQTRGIFGAIAGFIENGWEGMIDGWYGFRHQNSEGTGQAADLKSTQAAIDQINGKLNRVIEKTNEKFHQIEKEFSEVEGRIQDLEKYVEDTKIDLWSYNAELLVALENQHTIDLTDSEMNKLFEKTRRQLRENAEDMGNGCFKIYHKCDNACIGSIRNGTYDHDVYRDEALNNRFQIKGVELKSGYKDWILWISFAISCFLLCVVLLGFIMWACQKGNIRCNICI.

Residues 1-16 (MKTIIALSYIFCLVLG) form the signal peptide. Residues 17–530 (QDFPGNDNST…VELKSGYKDW (514 aa)) are Extracellular-facing. N-linked (GlcNAc...) asparagine; by host glycosylation is found at Asn24, Asn38, Asn54, and Asn79. Cystine bridges form between Cys30–Cys482, Cys68–Cys293, Cys80–Cys92, Cys113–Cys155, Cys297–Cys321, and Cys489–Cys493. An N-linked (GlcNAc...) asparagine; by host glycan is attached at Asn97. N-linked (GlcNAc...) asparagine; by host glycans are attached at residues Asn181 and Asn301. Asn499 carries N-linked (GlcNAc...) asparagine; by host glycosylation. A helical transmembrane segment spans residues 531–551 (ILWISFAISCFLLCVVLLGFI). Residues 552–566 (MWACQKGNIRCNICI) are Cytoplasmic-facing. S-palmitoyl cysteine; by host attachment occurs at residues Cys555, Cys562, and Cys565.

Belongs to the influenza viruses hemagglutinin family. As to quaternary structure, homotrimer of disulfide-linked HA1-HA2. Palmitoylated. Post-translationally, in natural infection, inactive HA is matured into HA1 and HA2 outside the cell by one or more trypsin-like, arginine-specific endoprotease secreted by the bronchial epithelial cells. One identified protease that may be involved in this process is secreted in lungs by club cells.

It localises to the virion membrane. It is found in the host apical cell membrane. Binds to sialic acid-containing receptors on the cell surface, bringing about the attachment of the virus particle to the cell. This attachment induces virion internalization either through clathrin-dependent endocytosis or through clathrin- and caveolin-independent pathway. Plays a major role in the determination of host range restriction and virulence. Class I viral fusion protein. Responsible for penetration of the virus into the cell cytoplasm by mediating the fusion of the membrane of the endocytosed virus particle with the endosomal membrane. Low pH in endosomes induces an irreversible conformational change in HA2, releasing the fusion hydrophobic peptide. Several trimers are required to form a competent fusion pore. The polypeptide is Hemagglutinin (Influenza A virus (strain A/Port Chalmers/1/1973 H3N2)).